A 97-amino-acid polypeptide reads, in one-letter code: Co-chaperonin GroES (97 aa).

Belongs to the GroES chaperonin family. In terms of assembly, heptamer of 7 subunits arranged in a ring. Interacts with the chaperonin GroEL.

Its subcellular location is the cytoplasm. In terms of biological role, together with the chaperonin GroEL, plays an essential role in assisting protein folding. The GroEL-GroES system forms a nano-cage that allows encapsulation of the non-native substrate proteins and provides a physical environment optimized to promote and accelerate protein folding. GroES binds to the apical surface of the GroEL ring, thereby capping the opening of the GroEL channel. The chain is Co-chaperonin GroES from Ectopseudomonas mendocina (strain ymp) (Pseudomonas mendocina).